Consider the following 57-residue polypeptide: Phospholipase A2 superbin b (57 aa).

Residues Y28, G30, and G32 each coordinate Ca(2+). C29 and C45 are oxidised to a cystine. H48 is a catalytic residue. Residue D49 coordinates Ca(2+).

Ca(2+) is required as a cofactor. Expressed by the venom gland.

The protein resides in the secreted. The catalysed reaction is a 1,2-diacyl-sn-glycero-3-phosphocholine + H2O = a 1-acyl-sn-glycero-3-phosphocholine + a fatty acid + H(+). Its function is as follows. Snake venom phospholipase A2 (PLA2) that inhibits collagen-induced platelet aggregation. In terms of inhibition of platelet aggregation, superbin b is more potent as superbin c, and d. PLA2 catalyzes the calcium-dependent hydrolysis of the 2-acyl groups in 3-sn-phosphoglycerides. This Austrelaps superbus (Lowland copperhead snake) protein is Phospholipase A2 superbin b.